A 283-amino-acid polypeptide reads, in one-letter code: Shikimate dehydrogenase (NADP(+)) (283 aa).

Shikimate-binding positions include 19–21 (SLS) and T66. K70 acts as the Proton acceptor in catalysis. Shikimate contacts are provided by N91 and D106. Residues 129 to 133 (GAGGA), 153 to 158 (NRTPEK), and L224 contribute to the NADP(+) site. Position 226 (Y226) interacts with shikimate. Residue G247 participates in NADP(+) binding.

This sequence belongs to the shikimate dehydrogenase family. As to quaternary structure, homodimer.

It catalyses the reaction shikimate + NADP(+) = 3-dehydroshikimate + NADPH + H(+). Its pathway is metabolic intermediate biosynthesis; chorismate biosynthesis; chorismate from D-erythrose 4-phosphate and phosphoenolpyruvate: step 4/7. Its function is as follows. Involved in the biosynthesis of the chorismate, which leads to the biosynthesis of aromatic amino acids. Catalyzes the reversible NADPH linked reduction of 3-dehydroshikimate (DHSA) to yield shikimate (SA). In Methanothermobacter thermautotrophicus (strain ATCC 29096 / DSM 1053 / JCM 10044 / NBRC 100330 / Delta H) (Methanobacterium thermoautotrophicum), this protein is Shikimate dehydrogenase (NADP(+)).